Consider the following 165-residue polypeptide: Shikimate kinase (165 aa).

11–16 lines the ATP pocket; sequence GAGKTT. Thr15 lines the Mg(2+) pocket. Positions 33, 57, and 78 each coordinate substrate. An ATP-binding site is contributed by Arg116. Arg134 lines the substrate pocket.

This sequence belongs to the shikimate kinase family. In terms of assembly, monomer. Requires Mg(2+) as cofactor.

It localises to the cytoplasm. The catalysed reaction is shikimate + ATP = 3-phosphoshikimate + ADP + H(+). It participates in metabolic intermediate biosynthesis; chorismate biosynthesis; chorismate from D-erythrose 4-phosphate and phosphoenolpyruvate: step 5/7. Functionally, catalyzes the specific phosphorylation of the 3-hydroxyl group of shikimic acid using ATP as a cosubstrate. This is Shikimate kinase from Bacillus mycoides (strain KBAB4) (Bacillus weihenstephanensis).